Here is an 807-residue protein sequence, read N- to C-terminus: Ribosomal RNA large subunit methyltransferase K/L (807 aa).

Residues 67–182 form the THUMP domain; that stretch reads QIYKICLWSR…EKQAEIFLDL (116 aa). A compositionally biased stretch (polar residues) spans 548–560; it reads NTQYGNPEASAQS. The tract at residues 548-602 is disordered; sequence NTQYGNPEASAQSKESKNAPEPKKDNRNRYKGNKFQQAREEAKRQEAQRLAQKKR. Composition is skewed to basic and acidic residues over residues 561 to 575 and 584 to 594; these read KESKNAPEPKKDNRN and QAREEAKRQEA.

It belongs to the methyltransferase superfamily. RlmKL family.

The protein localises to the cytoplasm. It catalyses the reaction guanosine(2445) in 23S rRNA + S-adenosyl-L-methionine = N(2)-methylguanosine(2445) in 23S rRNA + S-adenosyl-L-homocysteine + H(+). It carries out the reaction guanosine(2069) in 23S rRNA + S-adenosyl-L-methionine = N(2)-methylguanosine(2069) in 23S rRNA + S-adenosyl-L-homocysteine + H(+). Its function is as follows. Specifically methylates the guanine in position 2445 (m2G2445) and the guanine in position 2069 (m7G2069) of 23S rRNA. The protein is Ribosomal RNA large subunit methyltransferase K/L of Psychrobacter sp. (strain PRwf-1).